Reading from the N-terminus, the 550-residue chain is Tether containing UBX domain for GLUT4 (550 aa).

Residue A2 is modified to N-acetylalanine. The disordered stretch occupies residues 185–320 (AVRSKAPGSP…EPPVDRDPVV (136 aa)). S193 carries the phosphoserine modification. A compositionally biased stretch (low complexity) spans 193–206 (SPVSSLSADQASSS). Basic and acidic residues predominate over residues 217–226 (SRGDLNHEGD). Over residues 242-252 (DAQTKQSTSEP) the composition is skewed to polar residues. Residues 313-376 (PVDRDPVVYH…LVTKAFREAQ (64 aa)) form an interaction with GLUT4 region. The 77-residue stretch at 382–458 (ERYPKVALRV…NLFPAALVHF (77 aa)) folds into the UBX domain. S496 is modified (phosphoserine). The interval 496–550 (SPPLLPAPDPVSLESEPIAEDGALGPPEPIQGTAQPVKRSLGKVPKWLKLPASKR) is disordered.

As to quaternary structure, interacts with VCP. Interacts with VCPKMT. Interacts with GLUT4. Ubiquitous.

Its subcellular location is the endomembrane system. The protein localises to the endoplasmic reticulum-Golgi intermediate compartment membrane. It is found in the cytoplasm. It localises to the nucleus. Its function is as follows. Enhances VCP methylation catalyzed by VCPKMT. Tethering protein that sequesters GLUT4-containing vesicles in the cytoplasm in the absence of insulin. Modulates the amount of GLUT4 that is available at the cell surface. This chain is Tether containing UBX domain for GLUT4 (Aspscr1), found in Mus musculus (Mouse).